Consider the following 187-residue polypeptide: Ribosome-recycling factor (187 aa).

This sequence belongs to the RRF family.

It localises to the cytoplasm. In terms of biological role, responsible for the release of ribosomes from messenger RNA at the termination of protein biosynthesis. May increase the efficiency of translation by recycling ribosomes from one round of translation to another. In Roseobacter denitrificans (strain ATCC 33942 / OCh 114) (Erythrobacter sp. (strain OCh 114)), this protein is Ribosome-recycling factor.